Consider the following 552-residue polypeptide: HTH-type transcriptional regulator SgrR (552 aa).

In terms of domain architecture, HTH marR-type spans 1–116 (MPSGRLQQQF…LISHLGRSFR (116 aa)). The segment at residues 26-49 (LNELADLLNCSRRHMRTLLNTMQA) is a DNA-binding region (H-T-H motif). Residues 163–493 (ELEADIAHHW…RDWQGDAAQW (331 aa)) form a solute-binding region.

Activates the small RNA gene sgrS under glucose-phosphate stress conditions as well as yfdZ. Represses its own transcription under both stress and non-stress conditions. Might act as a sensor of the intracellular accumulation of phosphoglucose by binding these molecules in its C-terminal solute-binding domain. This is HTH-type transcriptional regulator SgrR from Salmonella typhimurium (strain LT2 / SGSC1412 / ATCC 700720).